A 72-amino-acid chain; its full sequence is UPF0352 protein Patl_3379 (72 aa).

This sequence belongs to the UPF0352 family.

The sequence is that of UPF0352 protein Patl_3379 from Pseudoalteromonas atlantica (strain T6c / ATCC BAA-1087).